Consider the following 374-residue polypeptide: Glutamate 5-kinase (374 aa).

Lys-16 is a binding site for ATP. Ser-56, Asp-143, and Asn-155 together coordinate substrate. An ATP-binding site is contributed by 175–176; sequence TD. The 79-residue stretch at 282 to 360 folds into the PUA domain; that stretch reads RGRVVLDAGA…SEIEAVLGYV (79 aa).

This sequence belongs to the glutamate 5-kinase family.

The protein localises to the cytoplasm. The enzyme catalyses L-glutamate + ATP = L-glutamyl 5-phosphate + ADP. It participates in amino-acid biosynthesis; L-proline biosynthesis; L-glutamate 5-semialdehyde from L-glutamate: step 1/2. In terms of biological role, catalyzes the transfer of a phosphate group to glutamate to form L-glutamate 5-phosphate. The protein is Glutamate 5-kinase of Ralstonia pickettii (strain 12J).